The following is a 121-amino-acid chain: Small ribosomal subunit protein uS13 (121 aa).

Residues 94-121 (GLPVRGQNTKNNARTRKGPRRTVANKKK) form a disordered region. Positions 106–121 (ARTRKGPRRTVANKKK) are enriched in basic residues.

Belongs to the universal ribosomal protein uS13 family. In terms of assembly, part of the 30S ribosomal subunit. Forms a loose heterodimer with protein S19. Forms two bridges to the 50S subunit in the 70S ribosome.

Its function is as follows. Located at the top of the head of the 30S subunit, it contacts several helices of the 16S rRNA. In the 70S ribosome it contacts the 23S rRNA (bridge B1a) and protein L5 of the 50S subunit (bridge B1b), connecting the 2 subunits; these bridges are implicated in subunit movement. Contacts the tRNAs in the A and P-sites. The protein is Small ribosomal subunit protein uS13 of Geobacillus kaustophilus (strain HTA426).